A 527-amino-acid chain; its full sequence is GMP synthase [glutamine-hydrolyzing] (527 aa).

In terms of domain architecture, Glutamine amidotransferase type-1 spans 4–202 (KILILDFGSQ…VLKICGAKPD (199 aa)). The active-site Nucleophile is Cys81. Active-site residues include His176 and Glu178. One can recognise a GMPS ATP-PPase domain in the interval 203–395 (WEMGNYIDEA…LGLPPSMVYR (193 aa)). 230 to 236 (SGGVDSS) provides a ligand contact to ATP.

As to quaternary structure, homodimer.

It catalyses the reaction XMP + L-glutamine + ATP + H2O = GMP + L-glutamate + AMP + diphosphate + 2 H(+). Its pathway is purine metabolism; GMP biosynthesis; GMP from XMP (L-Gln route): step 1/1. Functionally, catalyzes the synthesis of GMP from XMP. This Paraburkholderia phymatum (strain DSM 17167 / CIP 108236 / LMG 21445 / STM815) (Burkholderia phymatum) protein is GMP synthase [glutamine-hydrolyzing].